Here is a 479-residue protein sequence, read N- to C-terminus: Poly(A) polymerase catalytic subunit (479 aa).

Catalysis depends on residues D202 and D204. Residues D202, D204, and D253 each coordinate Ca(2+).

This sequence belongs to the poxviridae poly(A) polymerase catalytic subunit family. Heterodimer of a large (catalytic) subunit and a small (regulatory) subunit.

It catalyses the reaction RNA(n) + ATP = RNA(n)-3'-adenine ribonucleotide + diphosphate. Functionally, polymerase that creates the 3'-poly(A) tail of mRNA's. This is Poly(A) polymerase catalytic subunit (OPG063) from Cowpox virus (strain GRI-90 / Grishak) (CPV).